Here is a 339-residue protein sequence, read N- to C-terminus: Phosphate acyltransferase (339 aa).

It belongs to the PlsX family. Homodimer. Probably interacts with PlsY.

The protein resides in the cytoplasm. The enzyme catalyses a fatty acyl-[ACP] + phosphate = an acyl phosphate + holo-[ACP]. The protein operates within lipid metabolism; phospholipid metabolism. In terms of biological role, catalyzes the reversible formation of acyl-phosphate (acyl-PO(4)) from acyl-[acyl-carrier-protein] (acyl-ACP). This enzyme utilizes acyl-ACP as fatty acyl donor, but not acyl-CoA. This is Phosphate acyltransferase from Brachyspira hyodysenteriae (strain ATCC 49526 / WA1).